We begin with the raw amino-acid sequence, 678 residues long: ABC transporter B family member 6 (678 aa).

6 helical membrane passes run 95–115, 128–148, 206–226, 230–250, 314–334, and 346–366; these read IILCVSIIFFSKLINLSVPLI, EWHLLILYGVLFLIQKSIWDI, LLFNIFPTLVELFTVSTFLLF, AEFAFINLTSCVVYIAFTLYV, FLLNFGQSSIIVIGTTLGLGL, and LGDVIAINTFIAQMFSPLSWL. One can recognise an ABC transmembrane type-1 domain in the interval 95–375; sequence IILCVSIIFF…LGSSYRMILT (281 aa). Residues 418–660 form the ABC transporter domain; the sequence is IEFRNISFTY…NGDYAHLWNQ (243 aa). Residues tyrosine 427 and 459–470 each bind ATP; that span reads GSTGGGKSTIFR.

Belongs to the ABC transporter superfamily. ABCB family. Heavy Metal importer (TC 3.A.1.210) subfamily.

The protein resides in the membrane. This is ABC transporter B family member 6 (abcB6) from Dictyostelium discoideum (Social amoeba).